Consider the following 95-residue polypeptide: HIG1 domain family member 1A, mitochondrial (95 aa).

Residue Ser2 is modified to N-acetylserine. One can recognise an HIG1 domain in the interval 2-93 (STNTDLSLSS…YQEFWANPKP (92 aa)). Ser8 bears the Phosphoserine mark. 2 helical membrane-spanning segments follow: residues 28–48 (PFVP…LYKL) and 69–89 (GFVV…EFWA).

In terms of assembly, associates with cytochrome c oxidase (COX, complex IV); proposed complex component. Also associates with respiratory chain supercomplexes.

The protein resides in the mitochondrion membrane. It localises to the mitochondrion inner membrane. Functionally, proposed subunit of cytochrome c oxidase (COX, complex IV), which is the terminal component of the mitochondrial respiratory chain that catalyzes the reduction of oxygen to water. May play a role in the assembly of respiratory supercomplexes. This chain is HIG1 domain family member 1A, mitochondrial (Higd1a), found in Mus musculus (Mouse).